The primary structure comprises 122 residues: Lithostathine (122 aa).

The signal sequence occupies residues 1 to 26; it reads MLPSMSLPSLXWMLLSCLMLLSQVQG. The propeptide occupies 27–37; the sequence is EDSPADTPSAR. Positions 38–122 constitute a C-type lectin domain; that stretch reads ISCPKGSMAY…LEPNAGGWEW (85 aa). Residues Cys40 and Cys51 are joined by a disulfide bond.

In terms of assembly, cleaved to give an A chain and a B chain joined by a disulfide bond. In pancreatic acinar cells.

It localises to the secreted. In terms of biological role, might act as an inhibitor of spontaneous calcium carbonate precipitation. The protein is Lithostathine (PTP) of Sus scrofa (Pig).